Consider the following 429-residue polypeptide: Glutamyl-tRNA reductase (429 aa).

Residues 50–53 (TCNR), S110, 115–117 (ETQ), and Q121 contribute to the substrate site. C51 functions as the Nucleophile in the catalytic mechanism. 190 to 195 (GAGEMA) contributes to the NADP(+) binding site.

Belongs to the glutamyl-tRNA reductase family. As to quaternary structure, homodimer.

The enzyme catalyses (S)-4-amino-5-oxopentanoate + tRNA(Glu) + NADP(+) = L-glutamyl-tRNA(Glu) + NADPH + H(+). The protein operates within porphyrin-containing compound metabolism; protoporphyrin-IX biosynthesis; 5-aminolevulinate from L-glutamyl-tRNA(Glu): step 1/2. In terms of biological role, catalyzes the NADPH-dependent reduction of glutamyl-tRNA(Glu) to glutamate 1-semialdehyde (GSA). The sequence is that of Glutamyl-tRNA reductase from Campylobacter hominis (strain ATCC BAA-381 / DSM 21671 / CCUG 45161 / LMG 19568 / NCTC 13146 / CH001A).